Here is a 357-residue protein sequence, read N- to C-terminus: D-alanine--D-alanine ligase (357 aa).

Residues 134–339 form the ATP-grasp domain; it reads KQLFEHRGLP…YPDLIAKLID (206 aa). Position 167-222 (167-222) interacts with ATP; sequence NDKLTYPVFVKPANLGSSVGISKCNNEEELKSGITEAFQFDRKLVIEQGINAREIE. 3 residues coordinate Mg(2+): aspartate 293, glutamate 306, and asparagine 308.

The protein belongs to the D-alanine--D-alanine ligase family. The cofactor is Mg(2+). It depends on Mn(2+) as a cofactor.

The protein localises to the cytoplasm. The catalysed reaction is 2 D-alanine + ATP = D-alanyl-D-alanine + ADP + phosphate + H(+). The protein operates within cell wall biogenesis; peptidoglycan biosynthesis. In terms of biological role, cell wall formation. This is D-alanine--D-alanine ligase from Staphylococcus epidermidis (strain ATCC 12228 / FDA PCI 1200).